The primary structure comprises 460 residues: Mitochondrial distribution and morphology protein 10 (460 aa).

The protein belongs to the MDM10 family. As to quaternary structure, component of the ER-mitochondria encounter structure (ERMES) or MDM complex, composed of MMM1, MDM10, MDM12 and MDM34. Associates with the mitochondrial outer membrane sorting assembly machinery SAM(core) complex.

The protein localises to the mitochondrion outer membrane. Component of the ERMES/MDM complex, which serves as a molecular tether to connect the endoplasmic reticulum and mitochondria. Components of this complex are involved in the control of mitochondrial shape and protein biogenesis and may function in phospholipid exchange. MDM10 is involved in the late assembly steps of the general translocase of the mitochondrial outer membrane (TOM complex). Functions in the TOM40-specific route of the assembly of outer membrane beta-barrel proteins, including the association of TOM40 with the receptor TOM22 and small TOM proteins. Can associate with the SAM(core) complex as well as the MDM12-MMM1 complex, both involved in late steps of the major beta-barrel assembly pathway, that is responsible for biogenesis of all outer membrane beta-barrel proteins. May act as a switch that shuttles between both complexes and channels precursor proteins into the TOM40-specific pathway. Plays a role in mitochondrial morphology and in the inheritance of mitochondria. The polypeptide is Mitochondrial distribution and morphology protein 10 (Candida glabrata (strain ATCC 2001 / BCRC 20586 / JCM 3761 / NBRC 0622 / NRRL Y-65 / CBS 138) (Yeast)).